A 261-amino-acid polypeptide reads, in one-letter code: Small ribosomal subunit protein uS2 (261 aa).

A disordered region spans residues 223-261 (EGKQGQDDSEDVEKEMADKAAAEDDEEESIEVVVEKSED).

The protein belongs to the universal ribosomal protein uS2 family.

The polypeptide is Small ribosomal subunit protein uS2 (Lactobacillus johnsonii (strain CNCM I-12250 / La1 / NCC 533)).